The chain runs to 83 residues: Large ribosomal subunit protein bL28 (83 aa).

This sequence belongs to the bacterial ribosomal protein bL28 family.

This Amoebophilus asiaticus (strain 5a2) protein is Large ribosomal subunit protein bL28.